Reading from the N-terminus, the 359-residue chain is Heat-inducible transcription repressor HrcA (359 aa).

It belongs to the HrcA family.

Negative regulator of class I heat shock genes (grpE-dnaK-dnaJ and groELS operons). Prevents heat-shock induction of these operons. The sequence is that of Heat-inducible transcription repressor HrcA from Sinorhizobium medicae (strain WSM419) (Ensifer medicae).